We begin with the raw amino-acid sequence, 415 residues long: Serine/threonine transporter SstT (415 aa).

Helical transmembrane passes span 23 to 43, 47 to 67, 85 to 105, 144 to 164, 181 to 201, 220 to 240, 293 to 313, and 333 to 353; these read ILIG…AAIA, LGTL…LMLV, ILFL…LFSF, ALLN…GFAL, AVTF…FGLV, LLVL…LLVF, IPLG…VLTL, and VVAS…LLLI.

This sequence belongs to the dicarboxylate/amino acid:cation symporter (DAACS) (TC 2.A.23) family.

Its subcellular location is the cell inner membrane. It catalyses the reaction L-serine(in) + Na(+)(in) = L-serine(out) + Na(+)(out). The enzyme catalyses L-threonine(in) + Na(+)(in) = L-threonine(out) + Na(+)(out). Involved in the import of serine and threonine into the cell, with the concomitant import of sodium (symport system). The protein is Serine/threonine transporter SstT of Klebsiella pneumoniae (strain 342).